The chain runs to 56 residues: Putative zinc-binding protein YnfU (56 aa).

Residues C19, C22, C41, and C44 each contribute to the Zn(2+) site.

Zn(2+) serves as cofactor.

The protein is Putative zinc-binding protein YnfU of Escherichia coli (strain K12).